The primary structure comprises 954 residues: ATPase 9, plasma membrane-type (954 aa).

Over 1-66 the chain is Cytoplasmic; sequence MAGNKDSSWD…EKKENKVLKF (66 aa). Residues 67–86 form a helical membrane-spanning segment; sequence LGFMWNPLSWVMELAAIMAI. Topologically, residues 87–98 are extracellular; sequence ALANGGGRPPDW. The chain crosses the membrane as a helical span at residues 99–119; it reads QDFVGITVLLIINSTISFIEE. The Cytoplasmic segment spans residues 120–248; the sequence is NNAGNAAAAL…GHFQKVLTAI (129 aa). A helical membrane pass occupies residues 249–269; it reads GNFCICSIAIGMLIEIVVMYP. The Extracellular portion of the chain corresponds to 270 to 278; it reads IQKRAYRDG. A helical transmembrane segment spans residues 279–296; the sequence is IDNLLVLLIGGIPIAMPT. Residues 297 to 648 are Cytoplasmic-facing; sequence VLSVTMAIGS…TSRAIFQRMK (352 aa). Catalysis depends on Asp-334, which acts as the 4-aspartylphosphate intermediate. Residues Asp-593 and Asp-597 each contribute to the Mg(2+) site. The chain crosses the membrane as a helical span at residues 649-670; the sequence is NYTIYAVSITIRIVMGFMLLAL. At 671–675 the chain is on the extracellular side; it reads IWKFD. A helical membrane pass occupies residues 676–698; sequence FSPFMVLIVAILNDGTIMTISKD. Residues 699 to 714 are Cytoplasmic-facing; the sequence is RVKPSPLPDSWKLKEI. A helical transmembrane segment spans residues 715-735; it reads FATGVVLGTYLAVMTVVFFWA. Topologically, residues 736-756 are extracellular; it reads AESTDFFSAKFGVRSISGNPH. A helical transmembrane segment spans residues 757–777; it reads ELTAAVYLQVSIVSQALIFVT. The Cytoplasmic portion of the chain corresponds to 778 to 789; sequence RSRSWSYVERPG. A helical membrane pass occupies residues 790 to 810; it reads FWLISAFFMAQLIATLIAVYA. At 811-818 the chain is on the extracellular side; sequence NWNFARIR. A helical transmembrane segment spans residues 819-839; it reads GIGWGWAGVIWLYSIVFYIPL. At 840–954 the chain is on the cytoplasmic side; it reads DILKFIIRYS…IEAIQQHYTL (115 aa). Phosphothreonine is present on Thr-886. At Ser-936 the chain carries Phosphoserine. Residues 952 to 954 are interaction with 14-3-3 proteins; it reads YTL. Thr-953 bears the Phosphothreonine mark.

This sequence belongs to the cation transport ATPase (P-type) (TC 3.A.3) family. Type IIIA subfamily. As to quaternary structure, binds to 14-3-3 proteins. The binding is induced by phosphorylation of Thr-953. Binding to 14-3-3 proteins activates the H(+)-ATPase. As to expression, anther specific. Expressed in guard cells.

It is found in the membrane. The catalysed reaction is ATP + H2O + H(+)(in) = ADP + phosphate + 2 H(+)(out). Its function is as follows. The plasma membrane H(+) ATPase of plants and fungi generates a proton gradient that drives the active transport of nutrients by H(+)-symport. The resulting external acidification and/or internal alkinization may mediate growth responses. The protein is ATPase 9, plasma membrane-type (AHA9) of Arabidopsis thaliana (Mouse-ear cress).